Here is a 1106-residue protein sequence, read N- to C-terminus: Exportin-T (1106 aa).

Residues 336–357 are disordered; the sequence is TPLESRTRTGPSAQNGQSDTSD. The segment covering 343–357 has biased composition (polar residues); sequence RTGPSAQNGQSDTSD.

Belongs to the exportin family.

Its subcellular location is the nucleus. It is found in the cytoplasm. Its function is as follows. tRNA nucleus export receptor which facilitates tRNA translocation across the nuclear pore complex. Involved in pre-tRNA splicing, probably by affecting the interaction of pre-tRNA with splicing endonuclease. This Mycosarcoma maydis (Corn smut fungus) protein is Exportin-T (LOS1).